Reading from the N-terminus, the 340-residue chain is tRNA N6-adenosine threonylcarbamoyltransferase (340 aa).

Fe cation contacts are provided by histidine 111 and histidine 115. Residues 134 to 138 (LVSGG), aspartate 167, glycine 180, and asparagine 276 each bind substrate. Aspartate 304 is a Fe cation binding site.

It belongs to the KAE1 / TsaD family. Fe(2+) serves as cofactor.

The protein localises to the cytoplasm. It catalyses the reaction L-threonylcarbamoyladenylate + adenosine(37) in tRNA = N(6)-L-threonylcarbamoyladenosine(37) in tRNA + AMP + H(+). Required for the formation of a threonylcarbamoyl group on adenosine at position 37 (t(6)A37) in tRNAs that read codons beginning with adenine. Is involved in the transfer of the threonylcarbamoyl moiety of threonylcarbamoyl-AMP (TC-AMP) to the N6 group of A37, together with TsaE and TsaB. TsaD likely plays a direct catalytic role in this reaction. The protein is tRNA N6-adenosine threonylcarbamoyltransferase of Helicobacter pylori (strain ATCC 700392 / 26695) (Campylobacter pylori).